A 275-amino-acid polypeptide reads, in one-letter code: Endolytic peptidoglycan transglycosylase RlpA (275 aa).

The first 22 residues, 1–22 (MQIKTITLKLSAVSLGALFFSG), serve as a signal peptide directing secretion. Cys23 carries the N-palmitoyl cysteine lipid modification. Cys23 carries S-diacylglycerol cysteine lipidation. One can recognise an SPOR domain in the interval 200-275 (IYEGGNFMVQ…AFAGAFVVRE (76 aa)).

It belongs to the RlpA family.

Its subcellular location is the cell membrane. Its function is as follows. Lytic transglycosylase with a strong preference for naked glycan strands that lack stem peptides. This is Endolytic peptidoglycan transglycosylase RlpA from Campylobacter jejuni subsp. jejuni serotype O:2 (strain ATCC 700819 / NCTC 11168).